Here is a 792-residue protein sequence, read N- to C-terminus: Vicilin Car i 2.0101 (792 aa).

Residues 1 to 26 (MVTKAKIPLFLFLSALFLALVCSSLA) form the signal peptide. Disordered stretches follow at residues 132–153 (ERRERRRGRDDDDKENPRDPRE), 182–217 (RFEEEQRRQEERERRRGRDNDDEENPRDPREQYRQC), 240–272 (ERLEEEQRKQEERERRRGRDEDDQNPRDPEQRY), 302–325 (EERERQRGRDRQDPQQQYHRCQRR), and 350–394 (QQGR…ESGE). 2 stretches are compositionally biased toward basic and acidic residues: residues 182–200 (RFEEEQRRQEERERRRGRD) and 207–217 (PRDPREQYRQC). The segment covering 302–314 (EERERQRGRDRQD) has biased composition (basic and acidic residues). Positions 315 to 325 (PQQQYHRCQRR) are enriched in low complexity. A compositionally biased stretch (basic and acidic residues) spans 350 to 375 (QQGREWGPDQASPRRESRGREEEQQR). Tyr-379 lines the Cu cation pocket. Cupin type-1 domains follow at residues 384-537 (QGLR…DRLE) and 582-754 (ISLK…EEIE). Cys-652, His-654, and His-698 together coordinate Cu cation. Residues 727–754 (LAGQNNIINQLEREAKELSFNMPREEIE) are a coiled coil.

It belongs to the 7S seed storage protein family. As to quaternary structure, homotrimer. Expressed in seed (at protein level). Expressed in seed.

Functionally, seed storage protein. The protein is Vicilin Car i 2.0101 of Carya illinoinensis (Pecan).